The chain runs to 689 residues: Methionine--tRNA ligase (689 aa).

The short motif at 15–25 (PYANGPIHLGH) is the 'HIGH' region element. C146, C149, C159, and C162 together coordinate Zn(2+). Positions 332 to 336 (KMSKS) match the 'KMSKS' region motif. K335 lines the ATP pocket. A disordered region spans residues 546–577 (KDNLQPTEAPKADKKADKKVEKKATTGDPLTD). Basic and acidic residues predominate over residues 555-570 (PKADKKADKKVEKKAT). One can recognise a tRNA-binding domain in the interval 588–689 (DFAKLDLRIA…QGAKPGMRVK (102 aa)).

This sequence belongs to the class-I aminoacyl-tRNA synthetase family. MetG type 1 subfamily. As to quaternary structure, homodimer. Zn(2+) serves as cofactor.

It is found in the cytoplasm. It catalyses the reaction tRNA(Met) + L-methionine + ATP = L-methionyl-tRNA(Met) + AMP + diphosphate. Is required not only for elongation of protein synthesis but also for the initiation of all mRNA translation through initiator tRNA(fMet) aminoacylation. In Shewanella denitrificans (strain OS217 / ATCC BAA-1090 / DSM 15013), this protein is Methionine--tRNA ligase.